Consider the following 224-residue polypeptide: Small ribosomal subunit protein uS3 (224 aa).

A KH type-2 domain is found at 39–107 (IREFLKKKPS…DVWVEIAEVK (69 aa)).

It belongs to the universal ribosomal protein uS3 family. In terms of assembly, part of the 30S ribosomal subunit. Forms a tight complex with proteins S10 and S14.

Functionally, binds the lower part of the 30S subunit head. Binds mRNA in the 70S ribosome, positioning it for translation. The polypeptide is Small ribosomal subunit protein uS3 (Chlamydia trachomatis serovar L2 (strain ATCC VR-902B / DSM 19102 / 434/Bu)).